A 380-amino-acid chain; its full sequence is Cytochrome b (380 aa).

Helical transmembrane passes span Phe-34–Met-54, Trp-78–Ile-99, Trp-114–Leu-134, and Phe-179–Thr-199. Heme b-binding residues include His-84 and His-98. Positions 183 and 197 each coordinate heme b. An a ubiquinone-binding site is contributed by His-202. 4 helical membrane-spanning segments follow: residues Leu-227–Ser-247, Leu-289–His-309, Leu-321–Ser-341, and Phe-348–Pro-368.

The protein belongs to the cytochrome b family. As to quaternary structure, the cytochrome bc1 complex contains 11 subunits: 3 respiratory subunits (MT-CYB, CYC1 and UQCRFS1), 2 core proteins (UQCRC1 and UQCRC2) and 6 low-molecular weight proteins (UQCRH/QCR6, UQCRB/QCR7, UQCRQ/QCR8, UQCR10/QCR9, UQCR11/QCR10 and a cleavage product of UQCRFS1). This cytochrome bc1 complex then forms a dimer. Heme b is required as a cofactor.

The protein resides in the mitochondrion inner membrane. Its function is as follows. Component of the ubiquinol-cytochrome c reductase complex (complex III or cytochrome b-c1 complex) that is part of the mitochondrial respiratory chain. The b-c1 complex mediates electron transfer from ubiquinol to cytochrome c. Contributes to the generation of a proton gradient across the mitochondrial membrane that is then used for ATP synthesis. The protein is Cytochrome b (MT-CYB) of Hydrobates pelagicus (European storm-petrel).